We begin with the raw amino-acid sequence, 313 residues long: B3 domain-containing protein At2g31720 (313 aa).

The tract at residues 80 to 110 (KNQDPEQNPNRVASSPSSCHLESKRPQKVVS) is disordered. Over residues 84–99 (PEQNPNRVASSPSSCH) the composition is skewed to polar residues. Positions 169–267 (WKQILDMDFL…MLFFAFVLSD (99 aa)) form a DNA-binding region, TF-B3.

The protein localises to the nucleus. This is B3 domain-containing protein At2g31720 (ARF70) from Arabidopsis thaliana (Mouse-ear cress).